The chain runs to 612 residues: uncharacterized protein (612 aa).

The segment at 171–217 (MLPPSLVQRNNATTSPTTDSASENNESVPSLTSSVSTSSSVYSSWNP) is disordered. Residues 177–196 (VQRNNATTSPTTDSASENNE) are compositionally biased toward polar residues. The segment covering 197-214 (SVPSLTSSVSTSSSVYSS) has biased composition (low complexity).

To yeast YNL018c.

This is an uncharacterized protein from Saccharomyces cerevisiae (strain ATCC 204508 / S288c) (Baker's yeast).